We begin with the raw amino-acid sequence, 981 residues long: Bifunctional glutamine synthetase adenylyltransferase/adenylyl-removing enzyme (981 aa).

An adenylyl removase region spans residues 1 to 473; sequence MTMPLPSIEQ…RSVFNNLIGF (473 aa). The segment at 479–981 is adenylyl transferase; that stretch reads ADDSDNAWSD…HQIWQKLFFE (503 aa).

Belongs to the GlnE family. Mg(2+) serves as cofactor.

The catalysed reaction is [glutamine synthetase]-O(4)-(5'-adenylyl)-L-tyrosine + phosphate = [glutamine synthetase]-L-tyrosine + ADP. It catalyses the reaction [glutamine synthetase]-L-tyrosine + ATP = [glutamine synthetase]-O(4)-(5'-adenylyl)-L-tyrosine + diphosphate. Its function is as follows. Involved in the regulation of glutamine synthetase GlnA, a key enzyme in the process to assimilate ammonia. When cellular nitrogen levels are high, the C-terminal adenylyl transferase (AT) inactivates GlnA by covalent transfer of an adenylyl group from ATP to specific tyrosine residue of GlnA, thus reducing its activity. Conversely, when nitrogen levels are low, the N-terminal adenylyl removase (AR) activates GlnA by removing the adenylyl group by phosphorolysis, increasing its activity. The regulatory region of GlnE binds the signal transduction protein PII (GlnB) which indicates the nitrogen status of the cell. This is Bifunctional glutamine synthetase adenylyltransferase/adenylyl-removing enzyme from Mannheimia succiniciproducens (strain KCTC 0769BP / MBEL55E).